A 394-amino-acid chain; its full sequence is Saposin-like protein 11 (394 aa).

Positions 1 to 18 are cleaved as a signal peptide; it reads MSVFRFLLFLSLLVGSNA. Residues Asn25 and Asn272 are each glycosylated (N-linked (GlcNAc...) asparagine). A Saposin B-type domain is found at 306-394; it reads GNMVCDICEK…SFCKHVPFCK (89 aa). 3 disulfide bridges follow: Cys310-Cys393, Cys313-Cys387, and Cys343-Cys359.

This is Saposin-like protein 11 (spp-11) from Caenorhabditis elegans.